The primary structure comprises 283 residues: MTDLTGILYIVATPIGNLQDITQRALETFAQVDLIAAEDTRHSGLLLSHYGIKKPFFALHDHNEQEKAHILVEKLKQGSNIALISDAGTPLISDPGFHLVRQCREAGIRVVPLPGACAAITALCASGIASDRFCFEGFLPAKSKARKDKLENIAEEDRTLIFYESTHRILDTLEDMQAVLGEERYIVLAREMTKTWETITGNTIKNLREWLLEDPNRTKGEMVLIVEGKPKSDNNDEISPQAVKALELIAEELPLKKAAAIVAELYGYKKNALYQFGLAHLEK.

This sequence belongs to the methyltransferase superfamily. RsmI family.

The protein localises to the cytoplasm. It catalyses the reaction cytidine(1402) in 16S rRNA + S-adenosyl-L-methionine = 2'-O-methylcytidine(1402) in 16S rRNA + S-adenosyl-L-homocysteine + H(+). Functionally, catalyzes the 2'-O-methylation of the ribose of cytidine 1402 (C1402) in 16S rRNA. The sequence is that of Ribosomal RNA small subunit methyltransferase I from Haemophilus influenzae (strain ATCC 51907 / DSM 11121 / KW20 / Rd).